Consider the following 232-residue polypeptide: Small ribosomal subunit protein uS3 (232 aa).

The KH type-2 domain maps to 39 to 107; sequence VRRFLEQRLK…PVHVNIEEVR (69 aa).

It belongs to the universal ribosomal protein uS3 family. In terms of assembly, part of the 30S ribosomal subunit. Forms a tight complex with proteins S10 and S14.

Functionally, binds the lower part of the 30S subunit head. Binds mRNA in the 70S ribosome, positioning it for translation. This chain is Small ribosomal subunit protein uS3, found in Chromohalobacter salexigens (strain ATCC BAA-138 / DSM 3043 / CIP 106854 / NCIMB 13768 / 1H11).